A 513-amino-acid chain; its full sequence is MQLNSTEISELIKQRIAQFNVVSEAHNEGTIVSVSDGVIRIHGLADCMQGEMISLPGNRYAIALNLERDSVGAVVMGPYADLAEGMKVKCTGRILEVPVGRGLLGRVVNTLGAPIDGKGPVDNDGFSAVEAIAPGVIDRQSVDQPVQTGYKAVDSMIPIGRGQRELIIGDRQTGKTALAIDAIINQRDSGIKCIYVAIGQKASTISNVVRKLEEHGALANTIVVVATASESAALQYLAPYAGCAMGEYFRDRGEDALIIYDDLSKQAVAYRQISLLLRRPPGREAFPGDVFYLHSRLLERAARVNADYVEAFTKGEVKGRTGSLTALPIIETQAGDVSAFVPTNVISITDGQIFLESNLFNAGIRPAVNPGISVSRVGGAAQTKIMKKLSGGIRTALAQYRELAAFSQFASDLDDATRKQLDHGQKVTELLKQKQYAPMSVAQQSLVLFAAERGYLADVELAKIGSFEAALLAYVDRDHAPLMQEINQSGGYNDEIEGKLKGILDSFKATQSW.

169–176 (GDRQTGKT) provides a ligand contact to ATP.

Belongs to the ATPase alpha/beta chains family. F-type ATPases have 2 components, CF(1) - the catalytic core - and CF(0) - the membrane proton channel. CF(1) has five subunits: alpha(3), beta(3), gamma(1), delta(1), epsilon(1). CF(0) has three main subunits: a(1), b(2) and c(9-12). The alpha and beta chains form an alternating ring which encloses part of the gamma chain. CF(1) is attached to CF(0) by a central stalk formed by the gamma and epsilon chains, while a peripheral stalk is formed by the delta and b chains.

It is found in the cell inner membrane. It carries out the reaction ATP + H2O + 4 H(+)(in) = ADP + phosphate + 5 H(+)(out). In terms of biological role, produces ATP from ADP in the presence of a proton gradient across the membrane. The alpha chain is a regulatory subunit. This is ATP synthase subunit alpha from Salmonella paratyphi C (strain RKS4594).